The chain runs to 181 residues: Peptidyl-prolyl cis-trans isomerase H (181 aa).

A PPIase cyclophilin-type domain is found at 17–180; that stretch reads FFDIALGGVP…QDVIITQCGE (164 aa).

The protein belongs to the cyclophilin-type PPIase family. PPIase H subfamily.

It is found in the nucleus. It carries out the reaction [protein]-peptidylproline (omega=180) = [protein]-peptidylproline (omega=0). Its function is as follows. PPIases accelerate the folding of proteins. It catalyzes the cis-trans isomerization of proline imidic peptide bonds in oligopeptides. The chain is Peptidyl-prolyl cis-trans isomerase H (cyp3) from Aspergillus fumigatus (strain ATCC MYA-4609 / CBS 101355 / FGSC A1100 / Af293) (Neosartorya fumigata).